Reading from the N-terminus, the 175-residue chain is Acetyl-CoA decarbonylase/synthase complex subunit epsilon 2 (175 aa).

Belongs to the CdhB family. In terms of assembly, heterotetramer of two alpha and two epsilon subunits. The ACDS complex is made up of alpha, epsilon, beta, gamma and delta subunits with a probable stoichiometry of (alpha(2)epsilon(2))(4)-beta(8)-(gamma(1)delta(1))(8).

Its function is as follows. Part of a complex that catalyzes the reversible cleavage of acetyl-CoA, allowing autotrophic growth from CO(2). The alpha-epsilon subcomponent functions as a carbon monoxide dehydrogenase. The precise role of the epsilon subunit is unclear; it may have a stabilizing role within the alpha(2)epsilon(2) component and/or be involved in electron transfer to FAD during a potential FAD-mediated CO oxidation. In Archaeoglobus fulgidus (strain ATCC 49558 / DSM 4304 / JCM 9628 / NBRC 100126 / VC-16), this protein is Acetyl-CoA decarbonylase/synthase complex subunit epsilon 2 (cdhB2).